The chain runs to 305 residues: MGIQTSPVLLASLGVGLVTLLGLAVGSYLVRRSRRPQVTLLDPNEKYLLRLLDKTTVSHNTKRFRFALPTAHHTLGLPVGKHIYLSTRIDGSLVIRPYTPVTSDEDQGYVDLVIKVYLKGVHPKFPEGGKMSQYLDSLKVGDVVEFRGPSGLLTYTGKGHFNIQPNKKSPPEPRVAKKLGMIAGGTGITPMLQLIRAILKVPEDPTQCFLLFANQTEKDIILREDLEELQARYPNRFKLWFTLDHPPKDWAYSKGFVTADMIREHLPAPGDDVLVLLCGPPPMVQLACHPNLDKLGYSQKMRFTY.

A helical transmembrane segment spans residues 8–28 (VLLASLGVGLVTLLGLAVGSY). The 113-residue stretch at 44-156 (NEKYLLRLLD…RGPSGLLTYT (113 aa)) folds into the FAD-binding FR-type domain. FAD-binding positions include 136 to 166 (DSLKVGDVVEFRGPSGLLTYTGKGHFNIQPN) and 175 to 210 (VAKKLGMIAGGTGITPMLQLIRAILKVPEDPTQCFL).

It belongs to the flavoprotein pyridine nucleotide cytochrome reductase family. It depends on FAD as a cofactor. Widely expressed.

It is found in the membrane. The catalysed reaction is 2 Fe(III)-[cytochrome b5] + NADH = 2 Fe(II)-[cytochrome b5] + NAD(+) + H(+). In terms of biological role, NADH-cytochrome b5 reductases are involved in desaturation and elongation of fatty acids, cholesterol biosynthesis, drug metabolism, and, in erythrocyte, methemoglobin reduction. The polypeptide is NADH-cytochrome b5 reductase 1 (CYB5R1) (Homo sapiens (Human)).